The chain runs to 957 residues: Ribonuclease 3-like protein 3 (957 aa).

The 139-residue stretch at Val-4 to Asn-142 folds into the RNase III 1 domain. The DRBM 1 domain maps to Asn-307–Ser-382. Positions Val-415 to Lys-551 constitute an RNase III 2 domain. DRBM domains are found at residues Glu-566 to Glu-645 and Asp-837 to Ser-912.

Ribonuclease that cleaves double-stranded RNA (dsRNA). In Arabidopsis thaliana (Mouse-ear cress), this protein is Ribonuclease 3-like protein 3 (RTL3).